Consider the following 342-residue polypeptide: Ferredoxin--NADP reductase (342 aa).

Residues Cys-17, Asp-36, Gln-44, Tyr-49, Ile-89, Phe-124, Asp-289, and Thr-330 each contribute to the FAD site.

It belongs to the ferredoxin--NADP reductase type 2 family. As to quaternary structure, homodimer. It depends on FAD as a cofactor.

The enzyme catalyses 2 reduced [2Fe-2S]-[ferredoxin] + NADP(+) + H(+) = 2 oxidized [2Fe-2S]-[ferredoxin] + NADPH. The protein is Ferredoxin--NADP reductase of Rhodopseudomonas palustris (strain BisA53).